Consider the following 472-residue polypeptide: Aspartyl/glutamyl-tRNA(Asn/Gln) amidotransferase subunit B (472 aa).

It belongs to the GatB/GatE family. GatB subfamily. Heterotrimer of A, B and C subunits.

It carries out the reaction L-glutamyl-tRNA(Gln) + L-glutamine + ATP + H2O = L-glutaminyl-tRNA(Gln) + L-glutamate + ADP + phosphate + H(+). The catalysed reaction is L-aspartyl-tRNA(Asn) + L-glutamine + ATP + H2O = L-asparaginyl-tRNA(Asn) + L-glutamate + ADP + phosphate + 2 H(+). Functionally, allows the formation of correctly charged Asn-tRNA(Asn) or Gln-tRNA(Gln) through the transamidation of misacylated Asp-tRNA(Asn) or Glu-tRNA(Gln) in organisms which lack either or both of asparaginyl-tRNA or glutaminyl-tRNA synthetases. The reaction takes place in the presence of glutamine and ATP through an activated phospho-Asp-tRNA(Asn) or phospho-Glu-tRNA(Gln). This chain is Aspartyl/glutamyl-tRNA(Asn/Gln) amidotransferase subunit B, found in Mycoplasmopsis agalactiae (strain NCTC 10123 / CIP 59.7 / PG2) (Mycoplasma agalactiae).